Here is a 1018-residue protein sequence, read N- to C-terminus: 2-oxoglutarate dehydrogenase-like, mitochondrial (1018 aa).

Ca(2+) contacts are provided by H138, D151, and D153. Thiamine diphosphate contacts are provided by R307, D406, N439, I441, and Q671. 3 residues coordinate Mg(2+): D406, N439, and I441.

The protein belongs to the alpha-ketoglutarate dehydrogenase family. In terms of assembly, the OGDHC complex comprises multiple copies of three catalytic enzyme components, the 2-oxoglutarate dehydrogenase (OGDH/E1), the dihydrolipoamide dehydrogenase (DLST/E2) and the dihydrolipoamide dehydrogenase (DLD/E3). OGDHL/E1-like isoenzyme may replace OGDH in the OGDHC complex in the brain. Thiamine diphosphate is required as a cofactor. The cofactor is Mg(2+).

Its subcellular location is the mitochondrion matrix. The enzyme catalyses N(6)-[(R)-lipoyl]-L-lysyl-[protein] + 2-oxoglutarate + H(+) = N(6)-[(R)-S(8)-succinyldihydrolipoyl]-L-lysyl-[protein] + CO2. Functionally, 2-oxoglutarate dehydrogenase (E1-like) component of the 2-oxoglutarate dehydrogenase multienzyme complex (OGDHC) which mediates the decarboxylation of alpha-ketoglutarate in the tricarboxylic acid cycle. The OGDHC complex catalyzes the overall conversion of 2-oxoglutarate to succinyl-CoA and CO(2) while reducing NAD(+) to NADH. The OGDHC complex is mainly active in the mitochondrion. Involved in the inhibition of cell proliferation and in apoptosis. This Xenopus laevis (African clawed frog) protein is 2-oxoglutarate dehydrogenase-like, mitochondrial (ogdhl).